Here is a 171-residue protein sequence, read N- to C-terminus: Calcium-binding protein F-like (171 aa).

4 consecutive EF-hand domains span residues 6-41, 57-80, 89-124, and 130-159; these read KIFE…KMNG, IDMD…KAKK, AALA…RGYT, and DQYL…RRID. Asp-19, Asn-21, Asp-23, Ser-25, and Asp-30 together coordinate Ca(2+). Ca(2+)-binding residues include Asp-102, Asp-104, Asp-106, Lys-108, Glu-113, Asp-137, Asp-139, Asp-141, Cys-143, and Glu-148.

The protein is Calcium-binding protein F-like (cbp12) of Dictyostelium discoideum (Social amoeba).